The chain runs to 466 residues: Uronate isomerase (466 aa).

The protein belongs to the metallo-dependent hydrolases superfamily. Uronate isomerase family.

The enzyme catalyses D-glucuronate = D-fructuronate. The catalysed reaction is aldehydo-D-galacturonate = keto-D-tagaturonate. Its pathway is carbohydrate metabolism; pentose and glucuronate interconversion. This is Uronate isomerase from Streptococcus agalactiae serotype III (strain NEM316).